The chain runs to 290 residues: MADLSFIEDAVAFPEKEEDEEEEEEGVEWGYEEGVEWGLVFPDANGEYQSPINLNSREARYDPSLLDVRLSPNYVVCRDCEVTNDGHTIQVILKSKSVLSGGPLPQGQEFELYEVRFHWGRENQRGSEHTVNFKAFPMELHLIHWNSTLFGSIDEAVGKPHGIVIIALFVQIGKEHVGLKAVTEILQDIQYKGKSKTIPCFNPNTLLPDPLLRDYWVYEGSLTIPPCSEGVTWILFRYPLTISQLQIEEFRRLRTHVKGAELVEGCDGILGDNFRPTQPLSDRVIRAAFQ.

Phosphoserine is present on S5. Residues 27–289 (VEWGYEEGVE…LSDRVIRAAF (263 aa)) form the Alpha-carbonic anhydrase domain. The active-site Proton donor/acceptor is the H87. Residues H118 and H141 each contribute to the Zn(2+) site.

Belongs to the alpha-carbonic anhydrase family.

Does not have a carbonic anhydrase catalytic activity. In Rattus norvegicus (Rat), this protein is Carbonic anhydrase-related protein (Ca8).